The following is a 316-amino-acid chain: Uracil-DNA glycosylase (316 aa).

Over residues 36 to 79 (AAAAAPAGAGAGASKPARPSAAARPAKGTPAASAATTATGADAS) the composition is skewed to low complexity. Residues 36 to 91 (AAAAAPAGAGAGASKPARPSAAARPAKGTPAASAATTATGADASAPPPDPGAPTWD) form a disordered region. Residue Asp159 is the Proton acceptor of the active site.

It belongs to the uracil-DNA glycosylase (UDG) superfamily. UNG family.

It is found in the host nucleus. The enzyme catalyses Hydrolyzes single-stranded DNA or mismatched double-stranded DNA and polynucleotides, releasing free uracil.. Functionally, excises uracil residues from the DNA which can arise as a result of misincorporation of dUMP residues by DNA polymerase or deamination of cytosines. Therefore may reduce deleterious uracil incorporation into the viral genome, particularly in terminally differentiated cells which lack DNA repair enzymes. The sequence is that of Uracil-DNA glycosylase (UL2) from Sus scrofa (Pig).